Here is a 383-residue protein sequence, read N- to C-terminus: Chromatin structure-remodeling complex subunit SFH1 (383 aa).

Residues 61–80 form a disordered region; that stretch reads DDDEKVHSDNGKGEGEEVGH. A compositionally biased stretch (basic and acidic residues) spans 64–80; sequence EKVHSDNGKGEGEEVGH.

It belongs to the SNF5 family.

The protein resides in the nucleus. Its function is as follows. Part of the chromatin structure-remodeling complex (RSC) which is involved in transcription regulation and nucleosome positioning. RSC is responsible for the transfer of a histone octamer from a nucleosome core particle to naked DNA. The reaction requires ATP and involves an activated RSC-nucleosome intermediate. Remodeling reaction also involves DNA translocation, DNA twist and conformational change. As a reconfigurer of centromeric and flanking nucleosomes, RSC complex is required both for proper kinetochore function in chromosome segregation and, via a PKC1-dependent signaling pathway, for organization of the cellular cytoskeleton. This subunit is essential for mitotic growth and required for cell cycle progression. The sequence is that of Chromatin structure-remodeling complex subunit SFH1 (SFH1) from Eremothecium gossypii (strain ATCC 10895 / CBS 109.51 / FGSC 9923 / NRRL Y-1056) (Yeast).